The following is a 155-amino-acid chain: Small ribosomal subunit protein uS7c (155 aa).

It belongs to the universal ribosomal protein uS7 family. Part of the 30S ribosomal subunit.

Its subcellular location is the plastid. The protein localises to the chloroplast. One of the primary rRNA binding proteins, it binds directly to 16S rRNA where it nucleates assembly of the head domain of the 30S subunit. In Saruma henryi (Upright wild ginger), this protein is Small ribosomal subunit protein uS7c (rps7).